Consider the following 277-residue polypeptide: Phosphatidylglycerol--prolipoprotein diacylglyceryl transferase (277 aa).

The next 4 membrane-spanning stretches (helical) occupy residues 18-38 (ISVK…LLLA), 51-71 (IIVD…RIYY), 89-109 (IWHG…TAII), and 116-136 (ISFW…QAIG). Residue Arg137 coordinates a 1,2-diacyl-sn-glycero-3-phospho-(1'-sn-glycerol). The next 3 membrane-spanning stretches (helical) occupy residues 177–197 (QPTF…LLII), 205–225 (GELF…IEGM), and 235–255 (FRVS…IIIY).

This sequence belongs to the Lgt family.

Its subcellular location is the cell membrane. The catalysed reaction is L-cysteinyl-[prolipoprotein] + a 1,2-diacyl-sn-glycero-3-phospho-(1'-sn-glycerol) = an S-1,2-diacyl-sn-glyceryl-L-cysteinyl-[prolipoprotein] + sn-glycerol 1-phosphate + H(+). It functions in the pathway protein modification; lipoprotein biosynthesis (diacylglyceryl transfer). Its function is as follows. Catalyzes the transfer of the diacylglyceryl group from phosphatidylglycerol to the sulfhydryl group of the N-terminal cysteine of a prolipoprotein, the first step in the formation of mature lipoproteins. This is Phosphatidylglycerol--prolipoprotein diacylglyceryl transferase from Listeria monocytogenes serotype 4b (strain CLIP80459).